The chain runs to 112 residues: Histone H2A, sperm (112 aa).

Q91 bears the N5-methylglutamine mark. Residue K106 forms a Glycyl lysine isopeptide (Lys-Gly) (interchain with G-Cter in ubiquitin) linkage.

It belongs to the histone H2A family. As to quaternary structure, the nucleosome is a histone octamer containing two molecules each of H2A, H2B, H3 and H4 assembled in one H3-H4 heterotetramer and two H2A-H2B heterodimers. The octamer wraps approximately 147 bp of DNA. Post-translationally, monoubiquitination gives a specific tag for epigenetic transcriptional repression.

The protein localises to the nucleus. It is found in the chromosome. In terms of biological role, core component of nucleosome. Nucleosomes wrap and compact DNA into chromatin, limiting DNA accessibility to the cellular machineries which require DNA as a template. Histones thereby play a central role in transcription regulation, DNA repair, DNA replication and chromosomal stability. DNA accessibility is regulated via a complex set of post-translational modifications of histones, also called histone code, and nucleosome remodeling. This is Histone H2A, sperm from Lytechinus pictus (Painted sea urchin).